The following is a 134-amino-acid chain: Small ribosomal subunit protein uS11 (134 aa).

This sequence belongs to the universal ribosomal protein uS11 family. In terms of assembly, part of the 30S ribosomal subunit. Interacts with proteins S7 and S18. Binds to IF-3.

Functionally, located on the platform of the 30S subunit, it bridges several disparate RNA helices of the 16S rRNA. Forms part of the Shine-Dalgarno cleft in the 70S ribosome. The chain is Small ribosomal subunit protein uS11 from Salinibacter ruber (strain DSM 13855 / M31).